The following is a 126-amino-acid chain: Large ribosomal subunit protein uL22 (126 aa).

Belongs to the universal ribosomal protein uL22 family. In terms of assembly, part of the 50S ribosomal subunit.

Its function is as follows. This protein binds specifically to 23S rRNA; its binding is stimulated by other ribosomal proteins, e.g. L4, L17, and L20. It is important during the early stages of 50S assembly. It makes multiple contacts with different domains of the 23S rRNA in the assembled 50S subunit and ribosome. Functionally, the globular domain of the protein is located near the polypeptide exit tunnel on the outside of the subunit, while an extended beta-hairpin is found that lines the wall of the exit tunnel in the center of the 70S ribosome. This is Large ribosomal subunit protein uL22 from Phenylobacterium zucineum (strain HLK1).